The chain runs to 347 residues: MRIDDLTQRLRALGAKPAHEQRVLRAWVQRSSMDNRRQAAKDFLPLALREALPALTAELEGLARLRSQHPGEDGSARLLVELADGQTVESVLLLRDGLCVSTQLGCAVGCVFCMTGREGLLRQLGSAEIVAQVVLARSLRPVKKVVFMGMGEPAHNLDNVLEAIDLLGTAGGIGHKNLVFSTVGDYRVFERLPRQRVKPALALSLHTTRADLRAQLLPRAPQIAPQELVELGERYARSTGYPIQYQWTLIEGVNDSPEEMDGIVRLLRGKYALMNLIPYNSVPELEFRRPGREAAVALAAYLHRHGVLAKLRQSAGQDVEGGCGQLRARVVKMDRRPRTARATPPTA.

Catalysis depends on E89, which acts as the Proton acceptor. In terms of domain architecture, Radical SAM core spans 92 to 318 (LLLRDGLCVS…AKLRQSAGQD (227 aa)). Residues C99 and C323 are joined by a disulfide bond. [4Fe-4S] cluster is bound by residues C106, C110, and C113. Residues 151 to 152 (GE), S181, 204 to 206 (SLH), and N280 each bind S-adenosyl-L-methionine. C323 functions as the S-methylcysteine intermediate in the catalytic mechanism.

Belongs to the radical SAM superfamily. RlmN family. The cofactor is [4Fe-4S] cluster.

It is found in the cytoplasm. This chain is Probable RNA methyltransferase azo0122, found in Azoarcus sp. (strain BH72).